Here is a 363-residue protein sequence, read N- to C-terminus: NAD(P)H-quinone oxidoreductase subunit 1, chloroplastic (363 aa).

6 helical membrane passes run 30 to 50 (FLPI…IVWL), 104 to 124 (IAVI…HLVL), 129 to 149 (IGVF…LMSG), 248 to 268 (YSGI…LVSS), 300 to 320 (VFGT…FLFI), and 343 to 363 (FLLP…LLSL).

This sequence belongs to the complex I subunit 1 family. NDH is composed of at least 16 different subunits, 5 of which are encoded in the nucleus.

The protein resides in the plastid. It localises to the chloroplast thylakoid membrane. It carries out the reaction a plastoquinone + NADH + (n+1) H(+)(in) = a plastoquinol + NAD(+) + n H(+)(out). It catalyses the reaction a plastoquinone + NADPH + (n+1) H(+)(in) = a plastoquinol + NADP(+) + n H(+)(out). NDH shuttles electrons from NAD(P)H:plastoquinone, via FMN and iron-sulfur (Fe-S) centers, to quinones in the photosynthetic chain and possibly in a chloroplast respiratory chain. The immediate electron acceptor for the enzyme in this species is believed to be plastoquinone. Couples the redox reaction to proton translocation, and thus conserves the redox energy in a proton gradient. The protein is NAD(P)H-quinone oxidoreductase subunit 1, chloroplastic of Eucalyptus globulus subsp. globulus (Tasmanian blue gum).